We begin with the raw amino-acid sequence, 837 residues long: Putative dimethyl sulfoxide reductase catalytic subunit A (837 aa).

Residues 1-36 (MSDTDLNATRRDVLKSGAVAAVGLSGGGLLSTLQEA) constitute a signal peptide (tat-type signal). The 4Fe-4S Mo/W bis-MGD-type domain maps to 53-110 (DQVVKTACSPNCRGKCPLDVFVRDGQIKKVEQQVPAAKTFKRGCTLGMTHLQRVYNAD). [4Fe-4S] cluster contacts are provided by C60, C64, C68, and C96. N200 contributes to the Mo-bis(molybdopterin guanine dinucleotide) binding site. The interval 813–837 (EHQSNEYTQHNPRGSSGTATDGDSS) is disordered. A compositionally biased stretch (low complexity) spans 826-837 (GSSGTATDGDSS).

This sequence belongs to the prokaryotic molybdopterin-containing oxidoreductase family. Probable multiprotein complex that likely consists of DmsA, DmsB and DmsC. Requires Mo-bis(molybdopterin guanine dinucleotide) as cofactor. It depends on [4Fe-4S] cluster as a cofactor. In terms of processing, predicted to be exported by the Tat system. The position of the signal peptide cleavage has not been experimentally proven.

It localises to the cell membrane. It catalyses the reaction dimethyl sulfide + a menaquinone + H2O = dimethyl sulfoxide + a menaquinol. In terms of biological role, dimethyl sulfoxide (DMSO) reductase catalyzes the reduction of dimethyl sulfoxide (DMSO) to dimethyl sulfide (DMS) during anaerobic respiration; it can also use trimethylamine N-oxide (TMAO) as terminal electron acceptor. Required for anaerobic respiration on DMSO and TMAO; subunit A is proposed to be catalytically active. This is Putative dimethyl sulfoxide reductase catalytic subunit A (dmsA) from Halobacterium salinarum (strain ATCC 700922 / JCM 11081 / NRC-1) (Halobacterium halobium).